Here is a 477-residue protein sequence, read N- to C-terminus: Bifunctional protein HldE (477 aa).

The ribokinase stretch occupies residues 1 to 318 (MKVNLPAFER…ENAVRGRADT (318 aa)). 195-198 (NLSE) contacts ATP. D264 is a catalytic residue. The tract at residues 344–477 (MTNGVFDILH…IKKIQTESEK (134 aa)) is cytidylyltransferase.

This sequence in the N-terminal section; belongs to the carbohydrate kinase PfkB family. The protein in the C-terminal section; belongs to the cytidylyltransferase family. Homodimer.

It carries out the reaction D-glycero-beta-D-manno-heptose 7-phosphate + ATP = D-glycero-beta-D-manno-heptose 1,7-bisphosphate + ADP + H(+). It catalyses the reaction D-glycero-beta-D-manno-heptose 1-phosphate + ATP + H(+) = ADP-D-glycero-beta-D-manno-heptose + diphosphate. It functions in the pathway nucleotide-sugar biosynthesis; ADP-L-glycero-beta-D-manno-heptose biosynthesis; ADP-L-glycero-beta-D-manno-heptose from D-glycero-beta-D-manno-heptose 7-phosphate: step 1/4. Its pathway is nucleotide-sugar biosynthesis; ADP-L-glycero-beta-D-manno-heptose biosynthesis; ADP-L-glycero-beta-D-manno-heptose from D-glycero-beta-D-manno-heptose 7-phosphate: step 3/4. Catalyzes the phosphorylation of D-glycero-D-manno-heptose 7-phosphate at the C-1 position to selectively form D-glycero-beta-D-manno-heptose-1,7-bisphosphate. Its function is as follows. Catalyzes the ADP transfer from ATP to D-glycero-beta-D-manno-heptose 1-phosphate, yielding ADP-D-glycero-beta-D-manno-heptose. The protein is Bifunctional protein HldE of Salmonella enteritidis PT4 (strain P125109).